A 295-amino-acid polypeptide reads, in one-letter code: CCAAT-binding factor complex subunit php4 (295 aa).

A compositionally biased stretch (low complexity) spans 1–19 (MESSKSPSEVEKSSSASPA). Residues 1 to 69 (MESSKSPSEV…GPTSALSVEE (69 aa)) are disordered. Residues 73 to 111 (RVREKQYQDTIGKLQKENNELLEQLEMLQAQLKNSTLDS) adopt a coiled-coil conformation. The Nuclear export signal signature appears at 93–100 (LLEQLEML). The disordered stretch occupies residues 108-130 (TLDSPKEVEVNSEVVKPDSATTE).

As to quaternary structure, component of tha CCAAT-binding complex composed of at least php2, php3, php4 and php5. Interacts with crm1 and grx4.

It localises to the cytoplasm. The protein localises to the nucleus. The protein resides in the cytoskeleton. It is found in the spindle pole. Functionally, component of the transcription regulatory CCAAT-binding complex. Required for the reprogramming of the cell for iron use. Down-regulates pcl1, sdh4, and isa1 underlow-iron conditions. In Schizosaccharomyces pombe (strain 972 / ATCC 24843) (Fission yeast), this protein is CCAAT-binding factor complex subunit php4 (php4).